The sequence spans 281 residues: Putative E3 ubiquitin-protein ligase SINA-like 6 (281 aa).

Residues 1–26 (MVGVLLSERNGSQKRHCSSISSDDGR) form a disordered region. The RING-type zinc finger occupies 45 to 81 (CPICYQALKIPVFQCGNGHLACSSCCPKLRNKCPACA). The segment at 95–280 (VLESVLVPCR…MMLCINELKQ (186 aa)) is SBD. The SIAH-type zinc-finger motif lies at 98-156 (SVLVPCRYADLGCTKTIYYGRESTHEKICNFSPCSCPVQGCNYTGSYKDLYEHYDLTHS). Zn(2+) contacts are provided by C103, C110, H122, C126, C133, C138, H150, and H155.

The protein belongs to the SINA (Seven in absentia) family.

The catalysed reaction is S-ubiquitinyl-[E2 ubiquitin-conjugating enzyme]-L-cysteine + [acceptor protein]-L-lysine = [E2 ubiquitin-conjugating enzyme]-L-cysteine + N(6)-ubiquitinyl-[acceptor protein]-L-lysine.. It functions in the pathway protein modification; protein ubiquitination. Functionally, E3 ubiquitin-protein ligase that mediates ubiquitination and subsequent proteasomal degradation of target proteins. E3 ubiquitin ligases accept ubiquitin from an E2 ubiquitin-conjugating enzyme in the form of a thioester and then directly transfers the ubiquitin to targeted substrates. It probably triggers the ubiquitin-mediated degradation of different substrates. This is Putative E3 ubiquitin-protein ligase SINA-like 6 from Arabidopsis thaliana (Mouse-ear cress).